We begin with the raw amino-acid sequence, 240 residues long: Uridylate kinase (240 aa).

13 to 16 (KFSG) contributes to the ATP binding site. Residue glycine 55 participates in UMP binding. Residues glycine 56 and arginine 60 each coordinate ATP. UMP-binding positions include aspartate 76 and 137–144 (TGNPFFTT). ATP contacts are provided by threonine 164, tyrosine 170, and aspartate 173.

It belongs to the UMP kinase family. In terms of assembly, homohexamer.

Its subcellular location is the cytoplasm. It carries out the reaction UMP + ATP = UDP + ADP. It participates in pyrimidine metabolism; CTP biosynthesis via de novo pathway; UDP from UMP (UMPK route): step 1/1. Its activity is regulated as follows. Inhibited by UTP. Catalyzes the reversible phosphorylation of UMP to UDP. This chain is Uridylate kinase, found in Helicobacter acinonychis (strain Sheeba).